The sequence spans 598 residues: MQHKHIRNFSIIAHIDHGKSTLSDRLIQHCGGLSEREMSAQVLDSMDIERERGITIKAQSVTLNYKARDGETYQLNFIDTPGHVDFSYEVSRSLAACEGALLVVDAGQGVEAQTLANCYTAIDLNMEVVPILNKIDLPQAEPDRVAEEIEDIVGIDAIDAVRCSAKTGIGIEDVLEVIVRQIPPPEGDIDAPLKALIVDSWFDNYQGVVSLVRIVQGELRKNDKIKIMSTGVVHQADKVGIFTPKATDTGILRAGEVGFIVAGIKEIHGAPVGDTITLARAPADAALPGFKKVKPQVYAGLFPISSDDYEDFRDALAKLSLNDASLFFEPESSSALGFGFRIGFLGMLHMEIIQERLEREYDLDLITTAPTVVYEVVTTDGETLYVDNPSKLPPVNSIDEIHEPIVEAHILVPQEYLGSVITLCVDKRGVQTSMTYHGKQVAVTYELPMAEVVMDFFDKLKSTSRGFASLDYNFKHFQTAEMSRLDILINGERVDALAMITHKDNAQSRGRDLVEKLRELIPRQMFDIAIQAAIGNQIVARSTIKQLRKNVIAKCYGGDVSRKKKLLQKQKDGKKRMKSVGNVELPQEAFLALLKVGK.

The tr-type G domain occupies 4–186 (KHIRNFSIIA…VIVRQIPPPE (183 aa)). Residues 16 to 21 (DHGKST) and 133 to 136 (NKID) each bind GTP.

Belongs to the TRAFAC class translation factor GTPase superfamily. Classic translation factor GTPase family. LepA subfamily.

Its subcellular location is the cell inner membrane. It carries out the reaction GTP + H2O = GDP + phosphate + H(+). In terms of biological role, required for accurate and efficient protein synthesis under certain stress conditions. May act as a fidelity factor of the translation reaction, by catalyzing a one-codon backward translocation of tRNAs on improperly translocated ribosomes. Back-translocation proceeds from a post-translocation (POST) complex to a pre-translocation (PRE) complex, thus giving elongation factor G a second chance to translocate the tRNAs correctly. Binds to ribosomes in a GTP-dependent manner. The protein is Elongation factor 4 of Pseudoalteromonas atlantica (strain T6c / ATCC BAA-1087).